A 488-amino-acid chain; its full sequence is Ribulose bisphosphate carboxylase large chain (488 aa).

Residues Asn127 and Thr177 each coordinate substrate. The active-site Proton acceptor is the Lys179. Lys181 contacts substrate. Residues Lys205, Asp207, and Glu208 each coordinate Mg(2+). Lys205 is modified (N6-carboxylysine). The active-site Proton acceptor is His297. Residues Arg298, His330, and Ser382 each coordinate substrate.

The protein belongs to the RuBisCO large chain family. Type I subfamily. Heterohexadecamer of 8 large chains and 8 small chains. Mg(2+) is required as a cofactor.

It is found in the plastid. The protein resides in the chloroplast. It catalyses the reaction 2 (2R)-3-phosphoglycerate + 2 H(+) = D-ribulose 1,5-bisphosphate + CO2 + H2O. It carries out the reaction D-ribulose 1,5-bisphosphate + O2 = 2-phosphoglycolate + (2R)-3-phosphoglycerate + 2 H(+). Functionally, ruBisCO catalyzes two reactions: the carboxylation of D-ribulose 1,5-bisphosphate, the primary event in carbon dioxide fixation, as well as the oxidative fragmentation of the pentose substrate in the photorespiration process. Both reactions occur simultaneously and in competition at the same active site. This Rhodomonas salina (Cryptomonas salina) protein is Ribulose bisphosphate carboxylase large chain.